Reading from the N-terminus, the 419-residue chain is Phosphoribosylamine--glycine ligase (419 aa).

In terms of domain architecture, ATP-grasp spans 109-311; sequence KQLLIEAGVP…LEKVLMACVE (203 aa). An ATP-binding site is contributed by 135-191; that stretch reads ATKMGAPIVVKADGLAAGKGVIVAQTSAEATTAIAELFDQGFEKIVVEEFLPGEEVS. Mg(2+)-binding residues include Glu281 and Asn283.

The protein belongs to the GARS family. Mg(2+) serves as cofactor. Mn(2+) is required as a cofactor.

It carries out the reaction 5-phospho-beta-D-ribosylamine + glycine + ATP = N(1)-(5-phospho-beta-D-ribosyl)glycinamide + ADP + phosphate + H(+). Its pathway is purine metabolism; IMP biosynthesis via de novo pathway; N(1)-(5-phospho-D-ribosyl)glycinamide from 5-phospho-alpha-D-ribose 1-diphosphate: step 2/2. This is Phosphoribosylamine--glycine ligase from Synechocystis sp. (strain ATCC 27184 / PCC 6803 / Kazusa).